Here is a 931-residue protein sequence, read N- to C-terminus: Histone-lysine N-methyltransferase EZ1 (931 aa).

The segment covering 1 to 30 has biased composition (low complexity); it reads MEAEAAAAVVASSASASASAGRSRPSSSAA. Disordered regions lie at residues 1–37, 372–450, and 491–549; these read MEAE…SNSA, PTHS…ITNR, and RNGN…YDSS. Residues 375–385 show a composition bias toward polar residues; the sequence is SSDNVMNQPGS. Over residues 386–398 the composition is skewed to basic residues; that stretch reads NRKKNGSSGRKTK. Residues 423-433 are compositionally biased toward polar residues; sequence SNKSPQHSPSP. Low complexity predominate over residues 500–509; sequence SSQQSSPSTR. A compositionally biased stretch (basic and acidic residues) spans 528–549; it reads AHNDSTEEANNRHSATDGYDSS. The SANT domain occupies 565 to 615; the sequence is YLRSWKAIEQGLLVKGLEIFGRNSCLIARNLLGGMKTCKDVFQYMNYIENN. The region spanning 664 to 763 is the CXC domain; that stretch reads FKRITERKDQ…TLGVPNQRGD (100 aa). Residues 778 to 893 enclose the SET domain; that stretch reads QRVLLGRSDV…AGEELFYDYR (116 aa). A compositionally biased stretch (basic and acidic residues) spans 903-915; sequence ARKPEASGAKDDG. The tract at residues 903-931 is disordered; that stretch reads ARKPEASGAKDDGQPFNGRAKKLAQNNRG.

Belongs to the class V-like SAM-binding methyltransferase superfamily. Histone-lysine methyltransferase family. EZ subfamily. In terms of tissue distribution, widely expressed.

The protein localises to the nucleus. It catalyses the reaction L-lysyl(27)-[histone H3] + 3 S-adenosyl-L-methionine = N(6),N(6),N(6)-trimethyl-L-lysyl(27)-[histone H3] + 3 S-adenosyl-L-homocysteine + 3 H(+). Functionally, polycomb group (PcG) protein. Catalytic subunit of some PcG multiprotein complex, which methylates 'Lys-27' of histone H3, leading to transcriptional repression of the affected target genes. PcG proteins are not required to initiate repression, but to maintain it during later stages of development. In Zea mays (Maize), this protein is Histone-lysine N-methyltransferase EZ1 (EZ1).